The chain runs to 610 residues: UvrABC system protein C (610 aa).

Positions 16-94 (SQPGVYRMYD…IKLYQPRYNV (79 aa)) constitute a GIY-YIG domain. The UVR domain occupies 204–239 (DQVINQLVSRMEQASQNLAFEEAARLRDQIQAVRRV).

Belongs to the UvrC family. Interacts with UvrB in an incision complex.

It localises to the cytoplasm. The UvrABC repair system catalyzes the recognition and processing of DNA lesions. UvrC both incises the 5' and 3' sides of the lesion. The N-terminal half is responsible for the 3' incision and the C-terminal half is responsible for the 5' incision. The chain is UvrABC system protein C from Cronobacter sakazakii (strain ATCC BAA-894) (Enterobacter sakazakii).